Consider the following 191-residue polypeptide: Neurotrophic factor BDNF precursor form (191 aa).

Residues 1–23 (GQGSLAYPGLRTQGNLETLGGPN) are disordered. The propeptide occupies 1–100 (GQGSLAYPGL…AANMSMRVRR (100 aa)). Asparagine 93 is a glycosylation site (N-linked (GlcNAc...) asparagine). Residues cysteine 113 and cysteine 180 are joined by a disulfide bond.

The protein belongs to the NGF-beta family.

Its subcellular location is the secreted. In terms of biological role, promotes the survival of neuronal populations that are all located either in the central nervous system or directly connected to it. The protein is Neurotrophic factor BDNF precursor form (BDNF) of Anilius scytale (Coral cylinder snake).